Reading from the N-terminus, the 142-residue chain is Inner membrane protein YqaA (142 aa).

The Cytoplasmic portion of the chain corresponds to 1-2; that stretch reads MS. A helical membrane pass occupies residues 3-23; that stretch reads EALSLFSLFASSFLSATLLPG. Topologically, residues 24–26 are periplasmic; it reads NSE. A helical transmembrane segment spans residues 27–47; the sequence is VVLVAMLLSGISHPWVLVLTA. At 48-86 the chain is on the cytoplasmic side; sequence TMGNSLGGLTNVILGRFFPLRKTSRWQEKATGWLKRYGA. The helical transmembrane segment at 87-107 threads the bilayer; the sequence is VTLLLSWMPVVGDLLCLLAGW. Topologically, residues 108 to 142 are periplasmic; the sequence is MRISWGPVIFFLCLGKALRYVAVAAATVQGMMWWH.

It to H.influenzae HI_0489.

The protein resides in the cell inner membrane. The protein is Inner membrane protein YqaA (yqaA) of Escherichia coli (strain K12).